A 453-amino-acid chain; its full sequence is Ribosome biogenesis protein YTM1 (453 aa).

The tract at residues 8 to 89 is ubiquitin-like (UBL) domain; the sequence is VKLRFFTREQ…ETFLNVEYTR (82 aa). The sufficient for interaction with ERB1 and association with 66S pre-ribosomes stretch occupies residues 99 to 453; it reads SFSNEDWVSS…INKGDNIFKS (355 aa). WD repeat units lie at residues 101-139, 141-179, 199-237, 278-318, 320-359, 366-406, and 417-453; these read SNED…EKQY, GHSA…LKQP, GHKA…MTVV, SHTG…CIDT, TTSY…TSKI, GHKN…PMYT, and GVND…IFKS.

This sequence belongs to the WD repeat WDR12/YTM1 family. As to quaternary structure, component of the NOP7 complex, composed of ERB1, NOP7 and YTM1. The complex is held together by ERB1, which interacts with NOP7 via its N-terminal domain and with YTM1 via a high-affinity interaction between the seven-bladed beta-propeller domains of the 2 proteins. The NOP7 complex associates with the 66S pre-ribosome. Interacts (via UBL domain) with MDN1 (via VWFA/MIDAS domain).

It is found in the nucleus. It localises to the nucleolus. The protein resides in the nucleoplasm. Component of the NOP7 complex, which is required for maturation of the 25S and 5.8S ribosomal RNAs and formation of the 60S ribosome. The sequence is that of Ribosome biogenesis protein YTM1 from Vanderwaltozyma polyspora (strain ATCC 22028 / DSM 70294 / BCRC 21397 / CBS 2163 / NBRC 10782 / NRRL Y-8283 / UCD 57-17) (Kluyveromyces polysporus).